Here is a 319-residue protein sequence, read N- to C-terminus: Phosphate acyltransferase (319 aa).

This sequence belongs to the PlsX family. Homodimer. Probably interacts with PlsY.

Its subcellular location is the cytoplasm. It carries out the reaction a fatty acyl-[ACP] + phosphate = an acyl phosphate + holo-[ACP]. It participates in lipid metabolism; phospholipid metabolism. Catalyzes the reversible formation of acyl-phosphate (acyl-PO(4)) from acyl-[acyl-carrier-protein] (acyl-ACP). This enzyme utilizes acyl-ACP as fatty acyl donor, but not acyl-CoA. In Chlamydia muridarum (strain MoPn / Nigg), this protein is Phosphate acyltransferase.